A 49-amino-acid polypeptide reads, in one-letter code: Chitin-binding lectin (49 aa).

Residues Asp2–Cys45 form the Chitin-binding type-1 domain. Disulfide bonds link Cys5/Cys22, Cys16/Cys28, Cys21/Cys35, and Cys39/Cys43.

As to quaternary structure, homodimer; disulfide-linked.

Chitin-binding lectin which is specific for N-acetylglucosamine oligomers. The chain is Chitin-binding lectin from Viscum album (European mistletoe).